The following is a 217-amino-acid chain: Protein-L-isoaspartate O-methyltransferase (217 aa).

Ser-65 is a catalytic residue.

Belongs to the methyltransferase superfamily. L-isoaspartyl/D-aspartyl protein methyltransferase family.

The protein resides in the cytoplasm. It catalyses the reaction [protein]-L-isoaspartate + S-adenosyl-L-methionine = [protein]-L-isoaspartate alpha-methyl ester + S-adenosyl-L-homocysteine. In terms of biological role, catalyzes the methyl esterification of L-isoaspartyl residues in peptides and proteins that result from spontaneous decomposition of normal L-aspartyl and L-asparaginyl residues. It plays a role in the repair and/or degradation of damaged proteins. The chain is Protein-L-isoaspartate O-methyltransferase from Chlorobium limicola (strain DSM 245 / NBRC 103803 / 6330).